The primary structure comprises 33 residues: Cyanophlyctin-beta (33 aa).

Cysteine 27 and cysteine 33 are disulfide-bonded.

Expressed by the skin glands.

The protein localises to the secreted. Its function is as follows. Antimicrobial peptide active against E.coli (MIC=5 uM), K.pneumoniae (MIC=10 uM), B.cereus (MIC=7 uM) and S.aureus (MIC=12 uM). Has very little hemolytic activity. The chain is Cyanophlyctin-beta from Euphlyctis cyanophlyctis (Skittering frog).